Consider the following 332-residue polypeptide: Glyceraldehyde-3-phosphate dehydrogenase 3 (332 aa).

NAD(+) contacts are provided by Arg-11, Ile-12, and Asp-33. Glycyl lysine isopeptide (Lys-Gly) (interchain with G-Cter in ubiquitin) cross-links involve residues Lys-46 and Lys-63. Thr-120 contacts NAD(+). 149 to 151 lines the D-glyceraldehyde 3-phosphate pocket; the sequence is SCT. Cys-150 acts as the Nucleophile in catalysis. Cys-150 and Cys-154 each carry cysteine persulfide. A Glycyl lysine isopeptide (Lys-Gly) (interchain with G-Cter in URM1) cross-link involves residue Lys-160. D-glyceraldehyde 3-phosphate contacts are provided by residues Thr-180, 209–210, and Arg-232; that span reads TG. Position 302 is a phosphoserine (Ser-302). Lys-307 participates in a covalent cross-link: Glycyl lysine isopeptide (Lys-Gly) (interchain with G-Cter in URM1). The NAD(+) site is built by Asn-314 and Tyr-318.

The protein belongs to the glyceraldehyde-3-phosphate dehydrogenase family. As to quaternary structure, homotetramer. In terms of processing, conjugated to URM1, a ubiquitin-like protein, in response to oxidative stresses. The attachment of URM1 to lysine residues exclusively depends on the presence of a peroxidatic cysteine in the target protein, with low specificity for the particular residue, motif, or structural context at which urmylation can occur. The URM1-conjugation reaction is mechanistically and directly coupled to the process of cysteine persulfidation, transfering the sulfur atom of the URM1 thiocarboxyl group to redox-active cysteine residues in the target protein if it is exposed to oxidative conditions. Post-translationally, persulfidated on specific redox-active cysteine residues. Persulfidation (also called protein S-sulfhydration) may provide a molecular mechanism that enables cells to protect vulnerable cysteine residues from reactive oxygen species (ROS) under stress conditions.

The protein resides in the cytoplasm. It is found in the mitochondrion. It carries out the reaction D-glyceraldehyde 3-phosphate + phosphate + NAD(+) = (2R)-3-phospho-glyceroyl phosphate + NADH + H(+). The catalysed reaction is NADH + H2O = (6R)-NADHX. The enzyme catalyses NADH + H2O = (6S)-NADHX. It catalyses the reaction NADPH + H2O = (6R)-NADPHX. It carries out the reaction NADPH + H2O = (6S)-NADPHX. Its pathway is carbohydrate degradation; glycolysis; pyruvate from D-glyceraldehyde 3-phosphate: step 1/5. In terms of biological role, glyceraldehyde-3-phosphate dehydrogenase (GAPDH) involved in glycolysis and gluconeogenesis. Catalyzes the reaction of glyceraldehyde-3-phosphate to 1,3 bis-phosphoglycerate. The contribution of the TDH1, TDH2, and TDH3 to the total glyceraldehyde-3-phosphate dehydrogenase activity is 10-15, 25-30, and 50-60%, respectively. As a side activity, catalyzes the hydration of the nicotinamide ring of NADH or NADPH at the C6 position to give the corresponding hydrates, NADHX and NADPHX, which exist as R and S epimers, that cannot act as electron donors or acceptors and inhibit several dehydrogenases, making them toxic. This Saccharomyces cerevisiae (strain ATCC 204508 / S288c) (Baker's yeast) protein is Glyceraldehyde-3-phosphate dehydrogenase 3.